Consider the following 378-residue polypeptide: Histidinol-phosphate aminotransferase (378 aa).

Residues 1-20 (MSVSAKETQRHPARPEPRPG) form a disordered region. Residues 7–17 (ETQRHPARPEP) are compositionally biased toward basic and acidic residues. K232 is subject to N6-(pyridoxal phosphate)lysine.

The protein belongs to the class-II pyridoxal-phosphate-dependent aminotransferase family. Histidinol-phosphate aminotransferase subfamily. In terms of assembly, homodimer. The cofactor is pyridoxal 5'-phosphate.

It carries out the reaction L-histidinol phosphate + 2-oxoglutarate = 3-(imidazol-4-yl)-2-oxopropyl phosphate + L-glutamate. It participates in amino-acid biosynthesis; L-histidine biosynthesis; L-histidine from 5-phospho-alpha-D-ribose 1-diphosphate: step 7/9. The sequence is that of Histidinol-phosphate aminotransferase from Azorhizobium caulinodans (strain ATCC 43989 / DSM 5975 / JCM 20966 / LMG 6465 / NBRC 14845 / NCIMB 13405 / ORS 571).